The chain runs to 244 residues: Tabinhibitin 8 (244 aa).

The N-terminal stretch at 1–23 is a signal peptide; it reads MTSILVSRFKISALTLQYATSDS. Residues 67–194 enclose the SCP domain; it reads YTGGGIIVLR…KTPLFFSSNC (128 aa). The Cell attachment site motif lies at 143–145; the sequence is RGD.

The protein belongs to the CRISP family. In terms of tissue distribution, expressed in salivary glands.

It localises to the secreted. In terms of biological role, inhibits platelet aggregation induced by all agonists tested (ADP, arachidonic acid, the thromboxane A2 analog U46619, thrombin, and snake venom snaclecs (TMVA that activates platelet through GPIB, and stejnulxin that specifically acts through GPVI (GP6))). May act by competing with fibrinogen for binding to glycoprotein IIb/IIIa (ITGA2B/ITGB3). This chain is Tabinhibitin 8, found in Tabanus yao (Horsefly).